The sequence spans 606 residues: Putative helicase 172L (606 aa).

One can recognise a Helicase ATP-binding domain in the interval 59–264 (GEKTWGVRGG…WAQLRFCGYK (206 aa)). 72 to 79 (LCMGLGKT) contributes to the ATP binding site. One can recognise a Helicase C-terminal domain in the interval 437–586 (YIKSSNFEIS…ASYLEGKERI (150 aa)).

This sequence belongs to the SNF2/RAD54 helicase family.

The sequence is that of Putative helicase 172L from Invertebrate iridescent virus 6 (IIV-6).